The primary structure comprises 236 residues: Ribonuclease HII (236 aa).

The 193-residue stretch at Arg27 to Pro219 folds into the RNase H type-2 domain. Positions 33, 34, and 128 each coordinate a divalent metal cation. Residues Arg212–Asp236 are disordered.

The protein belongs to the RNase HII family. It depends on Mn(2+) as a cofactor. Mg(2+) is required as a cofactor.

The protein resides in the cytoplasm. It catalyses the reaction Endonucleolytic cleavage to 5'-phosphomonoester.. In terms of biological role, endonuclease that specifically degrades the RNA of RNA-DNA hybrids. In Ralstonia nicotianae (strain ATCC BAA-1114 / GMI1000) (Ralstonia solanacearum), this protein is Ribonuclease HII.